The primary structure comprises 21 residues: Protein YmjD (21 aa).

This Escherichia coli (strain K12) protein is Protein YmjD (ymjD).